The following is an 823-amino-acid chain: Protein Jade-3 (823 aa).

A disordered region spans residues 1–40 (MKRHRPVSSSESSDECPSTSFTSSSMYRKKSKNPKEQKKS). Over residues 8-20 (SSSESSDECPSTS) the composition is skewed to low complexity. Lys30, Lys32, and Lys35 each carry N6-acetyllysine. A PHD-type 1 zinc finger spans residues 200-250 (DVICDVCRSPDSEEGNDMVFCDKCNVCVHQACYGILKIPEGSWLCRSCVLG). Residues 252–286 (YPQCVLCPKKGGAMKTTRTGTKWAHVSCALWIPEV) form a C2HC pre-PHD-type zinc finger. Residues 310-366 (LVCNLCKLKTGACIQCSVKSCITAFHVTCAFEHGLEMKTILDEGDEVKFKSFCLKHS) form a PHD-type 2 zinc finger. 2 disordered regions span residues 543-585 (LKMP…PEEP) and 601-631 (KSNC…AEFY). Positions 549–562 (TSEDCKDSSTETEH) are enriched in basic and acidic residues. A phosphoserine mark is found at Ser566 and Ser578. Residue Lys601 is modified to N6-acetyllysine. Position 608 is a phosphoserine (Ser608). Lys638 is modified (N6-acetyllysine). Positions 651 to 676 (SIGNGKNQPNSRVSSSNGLEGNWSGN) are disordered. Residue Lys735 is modified to N6-acetyllysine. The disordered stretch occupies residues 756 to 823 (TGRASYQETD…HPHSHSSMQR (68 aa)). A phosphoserine mark is found at Ser774 and Ser776. Basic and acidic residues predominate over residues 781–809 (EGSKETPRVKRESSDRENPSHDSARECHG).

This sequence belongs to the JADE family. As to quaternary structure, component of the HBO1 complex composed at least of ING4 or ING5, MYST2/HBO1, MEAF6, and one of JADE1, JADE2 and JADE3.

Scaffold subunit of some HBO1 complexes, which have a histone H4 acetyltransferase activity. The protein is Protein Jade-3 (Jade3) of Mus musculus (Mouse).